A 1162-amino-acid polypeptide reads, in one-letter code: MEDIDQSSLVSSSADSPPRPPPAFKYQFVTEPEDEEDEEDEEEEEDDEDLEELEVLERKPAAGLSAAPVPPAAAPLLDFSSDSVPPAPRGPLPAAPPTAPERQPSWERSPAASAPSLPPAAAVLPSKLPEDDEPPARPPAPAGASPLAEPAAPPSTPAAPKRRGSGSVDETLFALPAASEPVIPSSAEKIMDLKEQPGNTVSSGQEDFPSVLFETAASLPSLSPLSTVSFKEHGYLGNLSAVASTEGTIEETLNEASRELPERATNPFVNRESAEFSVLEYSEMGSSFNGSPKGESAMLVENTKEEVIVRSKDKEDLVCSAALHNPQESPATLTKVVKEDGVMSPEKTMDIFNEMKMSVVAPVREEYADFKPFEQAWEVKDTYEGSRDVLAARANMESKVDKKCFEDSLEQKGHGKDSESRNENASFPRTPELVKDGSRAYITCDSFSSATESTAANIFPVLEDHTSENKTDEKKIEERKAQIITEKTSPKTSNPFLVAIHDSEADYVTTDNLSKVTEAVVATMPEGLTPDLVQEACESELNEATGTKIAYETKVDLVQTSEAIQESIYPTAQLCPSFEEAEATPSPVLPDIVMEAPLNSLLPSTGASVAQPSASPLEVPSPVSYDGIKLEPENPPPYEEAMSVALKTSDSKEEIKEPESFNAAAQEAEAPYISIACDLIKETKLSTEPSPEFSNYSEIAKFEKSVPDHCELVDDSSPESEPVDLFSDDSIPEVPQTQEEAVMLMKESLTEVSETVTQHKHKERLSASPQEVGKPYLESFQPNLHITKDAASNEIPTLTKKETISLQMEEFNTAIYSNDDLLSSKEDKMKESETFSDSSPIEIIDEFPTFVSAKDDSPKEYTDLEVSNKSEIANVQSGANSLPCSELPCDLSFKNTYPKDEAHVSDEFSKSRSSVSKVPLLLPNVSALESQIEMGNIVKPKVLTKEAEEKLPSDTEKEDRSLTAVLSAELNKTSVVDLLYWRDIKKTGVVFGASLFLLLSLTVFSIVSVTAYIALALLSVTISFRIYKGVIQAIQKSDEGHPFRAYLESEVAISEELVQKYSNSALGHVNSTIKELRRLFLVDDLVDSLKFAVLMWVFTYVGALFNGLTLLILALISLFSIPVIYERHQAQIDHYLGLANKSVKDAMAKIQAKIPGLKRKAE.

An N-acetylmethionine modification is found at methionine 1. A disordered region spans residues 1 to 183 (MEDIDQSSLV…ALPAASEPVI (183 aa)). Topologically, residues 1–988 (MEDIDQSSLV…LYWRDIKKTG (988 aa)) are cytoplasmic. Serine 7 and serine 16 each carry phosphoserine. Positions 7-16 (SSLVSSSADS) are enriched in low complexity. Residues 31–54 (EPEDEEDEEDEEEEEDDEDLEELE) show a composition bias toward acidic residues. Pro residues predominate over residues 85 to 99 (PPAPRGPLPAAPPTA). At serine 105 the chain carries Phosphoserine. Residues 109 to 127 (SPAASAPSLPPAAAVLPSK) are compositionally biased toward low complexity. Phosphoserine is present on residues serine 145, serine 165, serine 167, serine 329, and serine 344. Residue threonine 348 is modified to Phosphothreonine. Residues 408–422 (SLEQKGHGKDSESRN) are compositionally biased toward basic and acidic residues. Residues 408-432 (SLEQKGHGKDSESRNENASFPRTPE) form a disordered region. At serine 426 the chain carries Phosphoserine. A Phosphothreonine modification is found at threonine 430. A phosphoserine mark is found at serine 489, serine 690, serine 727, serine 768, and serine 832. The interval 711–730 (ELVDDSSPESEPVDLFSDDS) is disordered. A compositionally biased stretch (acidic residues) spans 713 to 730 (VDDSSPESEPVDLFSDDS). Threonine 834 carries the post-translational modification Phosphothreonine. 2 positions are modified to phosphoserine: serine 857 and serine 961. Residues 975–1162 (VVDLLYWRDI…KIPGLKRKAE (188 aa)) form the Reticulon domain. A helical membrane pass occupies residues 989–1009 (VVFGASLFLLLSLTVFSIVSV). Topologically, residues 1010 to 1078 (TAYIALALLS…VNSTIKELRR (69 aa)) are lumenal. Residue lysine 1074 is modified to N6-acetyllysine. A helical membrane pass occupies residues 1079 to 1099 (LFLVDDLVDSLKFAVLMWVFT). Topologically, residues 1100 to 1162 (YVGALFNGLT…KIPGLKRKAE (63 aa)) are cytoplasmic.

In terms of assembly, binds to RTN4R. Interacts with ATL1. Interacts with TMEM170A. Interacts with RTN4IP1. Interacts in trans with CNTNAP1. Interacts with REEP5. Interacts with GPR50. Interacts with synaptic plasticity regulator PANTS; the interaction results in enhanced RTN4-mediated inhibition of AMPA receptor clustering. As to quaternary structure, homodimer. Interacts with BAD/Bcl-xl and BCL2. Interact with RTN3. Interacts with NGBR. Interacts with SPTLC1. Interacts with GRAMD4. Interacts with CDH5. Interacts with BACE1 and BACE2. Interacts with REEP5. Interacts with RETREG3. In terms of assembly, interacts with BACE1 and BACE2. Interacts with TMEM33. Expressed in cardiomyocytes (at protein level). Highly expressed in brain but not deteceted in aorta, femoral and carotid arteries. Main isoform expressed in neurons. As to expression, expressed in cardiomyocytes (at protein level). Expressed in splenocytes, T-cells, B-cells, bone marrow derived dendritic cells and macrophages (at protein level). Expressed in neurons. Highly expressed in endothelial cells and vascular smooth muscle cells, including blood vessels and mesenteric arteries. Expressed in bronchial and alveolar epithelial cells as well as vascular endothelial cells of lungs. In terms of tissue distribution, expressed in B-cells, bone marrow dendritic cells and macrophages (at protein level). Expressed in cardiomyocytes. As to expression, expressed at very low levels in neurons.

It localises to the endoplasmic reticulum membrane. It is found in the cell membrane. The protein resides in the synapse. The protein localises to the cell junction. Required to induce the formation and stabilization of endoplasmic reticulum (ER) tubules. They regulate membrane morphogenesis in the ER by promoting tubular ER production. They influence nuclear envelope expansion, nuclear pore complex formation and proper localization of inner nuclear membrane proteins. However each isoform have specific functions mainly depending on their tissue expression specificities. Its function is as follows. Developmental neurite growth regulatory factor with a role as a negative regulator of axon-axon adhesion and growth, and as a facilitator of neurite branching. Regulates neurite fasciculation, branching and extension in the developing nervous system. Involved in down-regulation of growth, stabilization of wiring and restriction of plasticity in the adult CNS. Regulates the radial migration of cortical neurons via an RTN4R-LINGO1 containing receptor complex. Acts as a negative regulator of central nervous system angiogenesis. Inhibits spreading, migration and sprouting of primary brain microvascular endothelial cells (MVECs). Also induces the retraction of MVECs lamellipodia and filopodia in a ROCK pathway-dependent manner. In terms of biological role, mainly function in endothelial cells and vascular smooth muscle cells, is also involved in immune system regulation. Modulator of vascular remodeling, promotes the migration of endothelial cells but inhibits the migration of vascular smooth muscle cells. Regulates endothelial sphingolipid biosynthesis with direct effects on vascular function and blood pressure. Inhibits serine palmitoyltransferase, SPTLC1, the rate-limiting enzyme of the novo sphingolipid biosynthetic pathway, thereby controlling production of endothelial sphingosine-1-phosphate (S1P). Required to promote macrophage homing and functions such as cytokine/chemokine gene expression involved in angiogenesis, arteriogenesis and tissue repair. Mediates ICAM1 induced transendothelial migration of leukocytes such as monocytes and neutrophils and acute inflammation. Necessary for immune responses triggered by nucleic acid sensing TLRs, such as TLR9, is required for proper TLR9 location to endolysosomes. Also involved in immune response to LPS. Plays a role in liver regeneration through the modulation of hepatocytes proliferation. Reduces the anti-apoptotic activity of Bcl-xl and Bcl-2. This is likely consecutive to their change in subcellular location, from the mitochondria to the endoplasmic reticulum, after binding and sequestration. With isoform C, inhibits BACE1 activity and amyloid precursor protein processing. Functionally, regulates cardiomyocyte apoptosis upon hypoxic conditions. With isoform B, inhibits BACE1 activity and amyloid precursor protein processing. This is Reticulon-4 from Mus musculus (Mouse).